Here is a 204-residue protein sequence, read N- to C-terminus: Phosphoribosyl-dephospho-CoA transferase (204 aa).

Residues Asp129 and Asp131 contribute to the active site.

It belongs to the MdcG family.

The enzyme catalyses apo-[malonate decarboxylase ACP] + 2'-(5''-triphospho-alpha-D-ribosyl)-3'-dephospho-CoA = holo-[malonate decarboxylase ACP] + diphosphate. Transfers 2'-(5-triphosphoribosyl)-3'-dephosphocoenzyme-A to the apo-[acyl-carrier-protein] of the malonate decarboxylase to yield holo-[acyl-carrier-protein]. This Pseudomonas putida (Arthrobacter siderocapsulatus) protein is Phosphoribosyl-dephospho-CoA transferase.